A 256-amino-acid chain; its full sequence is DNA repair protein RecO (256 aa).

This sequence belongs to the RecO family.

Functionally, involved in DNA repair and RecF pathway recombination. The chain is DNA repair protein RecO from Thiobacillus denitrificans (strain ATCC 25259 / T1).